Consider the following 226-residue polypeptide: Phosphoglycolate phosphatase (226 aa).

Catalysis depends on Asp8, which acts as the Nucleophile. Asp8 and Asp10 together coordinate Mg(2+). A substrate-binding site is contributed by Lys152. Positions 175 and 179 each coordinate Mg(2+).

This sequence belongs to the archaeal SPP-like hydrolase family. The cofactor is Mg(2+).

It catalyses the reaction 2-phosphoglycolate + H2O = glycolate + phosphate. Functionally, catalyzes the dephosphorylation of 2-phosphoglycolate. This Natronomonas pharaonis (strain ATCC 35678 / DSM 2160 / CIP 103997 / JCM 8858 / NBRC 14720 / NCIMB 2260 / Gabara) (Halobacterium pharaonis) protein is Phosphoglycolate phosphatase.